The primary structure comprises 867 residues: G-protein coupled receptor family C group 6 member A (867 aa).

An N-terminal signal peptide occupies residues 1–19 (MDLMSFILLWAGLMKVAEA). Residues 20–566 (SIAQFSQLGA…EYFDWNSGFA (547 aa)) are Extracellular-facing. Asn-51, Asn-55, Asn-97, Asn-296, Asn-308, Asn-336, Asn-356, Asn-370, Asn-527, and Asn-547 each carry an N-linked (GlcNAc...) asparagine glycan. Residues 567–587 (IVLLILAALGVLLLFFMSALF) form a helical membrane-spanning segment. Residues 588-602 (FWQRHSPVVKAAGGP) are Cytoplasmic-facing. The chain crosses the membrane as a helical span at residues 603–623 (LCHLILVSLLGSFISVVFFVG). The Extracellular portion of the chain corresponds to 624–634 (EPSDLTCRARQ). Residues 635–655 (VIFGFSFTLCVSCILVKSLKI) traverse the membrane as a helical segment. The Cytoplasmic segment spans residues 656 to 675 (LLAFEMNFELKELLCMLYKP). Residues 676-696 (YMIVSVGMGVQIIICTVWLTL) form a helical membrane-spanning segment. The Extracellular portion of the chain corresponds to 697-716 (YKPFKDKEVQTESILLECNE). A helical membrane pass occupies residues 717–737 (GFYVMFWLMLGYIALLALFCF). Over 738-754 (TFAYIGRKLPQKYNEAK) the chain is Cytoplasmic. Residues 755 to 775 (FITFSMVICLMAWIIFIPIHV) form a helical membrane-spanning segment. Residues 776-781 (TTSGKY) are Extracellular-facing. Residues 782-802 (VPAVEMVVILISNYGILSCHF) traverse the membrane as a helical segment. Over 803-867 (LPKSYIILFK…LSFVPEEKHE (65 aa)) the chain is Cytoplasmic.

This sequence belongs to the G-protein coupled receptor 3 family. In terms of assembly, homodimer; disulfide-linked.

It is found in the cell membrane. Its function is as follows. Olfactory receptor that is activated by amino acids that act as potent odorants in fish. Displays preference for acidic amino acids such as Glu over basic amino acids. The chain is G-protein coupled receptor family C group 6 member A (gprc6a) from Danio rerio (Zebrafish).